Consider the following 1139-residue polypeptide: Dual 3',5'-cyclic-AMP and -GMP phosphodiesterase beta (1139 aa).

2 disordered regions span residues 1 to 42 (MGKV…NINK) and 154 to 177 (GISEDNRQNQRNADNNSLNWSTSN). Over 1 to 429 (MGKVEDFEEH…LNLNNWISSR (429 aa)) the chain is Cytoplasmic. Over residues 9-22 (EHNKNSNQDIEKNV) the composition is skewed to basic and acidic residues. The span at 29-42 (NSNTINDQNENINK) shows a compositional bias: polar residues. Residues 430–450 (MIIIGIVMLILSFIIWPLTTW) form a helical membrane-spanning segment. At 451–462 (SLKTSTWGRETY) the chain is on the extracellular side. A helical membrane pass occupies residues 463-483 (IIILFHTLMAINTLILIFFII). At 484–498 (IGSTELCKYSECMSY) the chain is on the cytoplasmic side. Residues 499 to 519 (VLFSLMVALWGLWNIAIGLTL) form a helical membrane-spanning segment. Over 520–536 (EYNPNLSEMPTTTYELE) the chain is Extracellular. Asn-524 carries an N-linked (GlcNAc...) asparagine glycan. A helical membrane pass occupies residues 537 to 557 (MIYVLTYIYGFLPLVIIDIFF). At 558 to 564 (PSRTKYN) the chain is on the cytoplasmic side. Residues 565 to 585 (WIIHLIFIFLNSSSIILVGSA) traverse the membrane as a helical segment. Over 586 to 592 (KPDFVPE) the chain is Extracellular. The helical transmembrane segment at 593 to 613 (IYVVFRILAYTTLCIFLYIGS) threads the bilayer. Topologically, residues 614–1139 (YTSELQIRYV…TLFFIKNVSD (526 aa)) are cytoplasmic. The region spanning 775–1098 (INISQLTKMI…IMWDTLMKEE (324 aa)) is the PDEase domain. His-847 serves as the catalytic Proton donor. 847–851 (HNTIH) is a binding site for a nucleoside 3',5'-cyclic phosphate. Residues His-851, His-887, Asp-888, and Asp-1000 each coordinate a divalent metal cation. The a nucleoside 3',5'-cyclic phosphate site is built by Asp-888, Asp-1000, and Gln-1052.

Belongs to the cyclic nucleotide phosphodiesterase family. It depends on a divalent metal cation as a cofactor.

The protein resides in the cell membrane. Its subcellular location is the endoplasmic reticulum membrane. It carries out the reaction 3',5'-cyclic GMP + H2O = GMP + H(+). The enzyme catalyses 3',5'-cyclic AMP + H2O = AMP + H(+). It functions in the pathway purine metabolism; 3',5'-cyclic GMP degradation; GMP from 3',5'-cyclic GMP: step 1/1. Its pathway is purine metabolism; 3',5'-cyclic AMP degradation; AMP from 3',5'-cyclic AMP: step 1/1. Functionally, plays a role in signal transduction by regulating the intracellular concentration of cyclic nucleotides cAMP and cGMP. Catalyzes the hydrolysis of both cAMP and cGMP to 5'-AMP and 5'-GMP, respectively. By regulating cAMP levels during the asexual blood stage and, thus PKA activation, required for merozoite invasion of erythrocytes and for the parasite development immediately following invasion. The polypeptide is Dual 3',5'-cyclic-AMP and -GMP phosphodiesterase beta (Plasmodium falciparum (isolate 3D7)).